Consider the following 132-residue polypeptide: Minor structural pilin EpdB (132 aa).

The propeptide occupies 1–4 (MSKG). A QXSXEXXXL motif is present at residues 9–19 (EFIVLFLALLV).

Post-translationally, the N-terminus is probably cleaved by the prepilin peptidase EppA, which recognizes the class III signal sequence.

It localises to the secreted. It is found in the cell surface. Its subcellular location is the fimbrium. Functionally, minor component of the type IV-like pili. Essential for pili formation. This is Minor structural pilin EpdB from Methanococcus maripaludis (strain DSM 14266 / JCM 13030 / NBRC 101832 / S2 / LL).